The chain runs to 290 residues: 4-hydroxy-3-methylbut-2-enyl diphosphate reductase (290 aa).

Cys12 provides a ligand contact to [4Fe-4S] cluster. His50 and His83 together coordinate (2E)-4-hydroxy-3-methylbut-2-enyl diphosphate. Positions 50 and 83 each coordinate dimethylallyl diphosphate. 2 residues coordinate isopentenyl diphosphate: His50 and His83. Position 105 (Cys105) interacts with [4Fe-4S] cluster. His133 serves as a coordination point for (2E)-4-hydroxy-3-methylbut-2-enyl diphosphate. Residue His133 coordinates dimethylallyl diphosphate. An isopentenyl diphosphate-binding site is contributed by His133. Catalysis depends on Glu135, which acts as the Proton donor. Thr173 serves as a coordination point for (2E)-4-hydroxy-3-methylbut-2-enyl diphosphate. Cys202 is a [4Fe-4S] cluster binding site. (2E)-4-hydroxy-3-methylbut-2-enyl diphosphate contacts are provided by Ser230, Asn232, and Ser274. The dimethylallyl diphosphate site is built by Ser230, Asn232, and Ser274. 3 residues coordinate isopentenyl diphosphate: Ser230, Asn232, and Ser274.

This sequence belongs to the IspH family. The cofactor is [4Fe-4S] cluster.

The enzyme catalyses isopentenyl diphosphate + 2 oxidized [2Fe-2S]-[ferredoxin] + H2O = (2E)-4-hydroxy-3-methylbut-2-enyl diphosphate + 2 reduced [2Fe-2S]-[ferredoxin] + 2 H(+). The catalysed reaction is dimethylallyl diphosphate + 2 oxidized [2Fe-2S]-[ferredoxin] + H2O = (2E)-4-hydroxy-3-methylbut-2-enyl diphosphate + 2 reduced [2Fe-2S]-[ferredoxin] + 2 H(+). The protein operates within isoprenoid biosynthesis; dimethylallyl diphosphate biosynthesis; dimethylallyl diphosphate from (2E)-4-hydroxy-3-methylbutenyl diphosphate: step 1/1. It functions in the pathway isoprenoid biosynthesis; isopentenyl diphosphate biosynthesis via DXP pathway; isopentenyl diphosphate from 1-deoxy-D-xylulose 5-phosphate: step 6/6. In terms of biological role, catalyzes the conversion of 1-hydroxy-2-methyl-2-(E)-butenyl 4-diphosphate (HMBPP) into a mixture of isopentenyl diphosphate (IPP) and dimethylallyl diphosphate (DMAPP). Acts in the terminal step of the DOXP/MEP pathway for isoprenoid precursor biosynthesis. This is 4-hydroxy-3-methylbut-2-enyl diphosphate reductase from Nitratidesulfovibrio vulgaris (strain ATCC 29579 / DSM 644 / CCUG 34227 / NCIMB 8303 / VKM B-1760 / Hildenborough) (Desulfovibrio vulgaris).